A 252-amino-acid chain; its full sequence is Chitooligosaccharide deacetylase (252 aa).

The Mg(2+) site is built by H61 and H125.

Belongs to the YdjC deacetylase family. ChbG subfamily. In terms of assembly, homodimer. Mg(2+) serves as cofactor.

Its subcellular location is the cytoplasm. The enzyme catalyses N,N'-diacetylchitobiose + H2O = N-acetyl-beta-D-glucosaminyl-(1-&gt;4)-D-glucosamine + acetate. It catalyses the reaction diacetylchitobiose-6'-phosphate + H2O = N'-monoacetylchitobiose-6'-phosphate + acetate. It participates in glycan degradation; chitin degradation. In terms of biological role, involved in the degradation of chitin. ChbG is essential for growth on the acetylated chitooligosaccharides chitobiose and chitotriose but is dispensable for growth on cellobiose and chitosan dimer, the deacetylated form of chitobiose. Deacetylation of chitobiose-6-P and chitotriose-6-P is necessary for both the activation of the chb promoter by the regulatory protein ChbR and the hydrolysis of phosphorylated beta-glucosides by the phospho-beta-glucosidase ChbF. Catalyzes the removal of only one acetyl group from chitobiose-6-P to yield monoacetylchitobiose-6-P, the inducer of ChbR and the substrate of ChbF. In Klebsiella pneumoniae (strain 342), this protein is Chitooligosaccharide deacetylase.